A 243-amino-acid chain; its full sequence is Cytochrome c oxidase subunit 2 (243 aa).

Residues 1 to 34 (MNNIIHNDAPTPWGIYFQDGASPVYDGIVELHDQ) lie on the Mitochondrial intermembrane side of the membrane. Residues 35-55 (VLFYLLIVLVGVSWILFSTIL) traverse the membrane as a helical segment. At 56–74 (RFRGSGIVHKYHNHSTTIE) the chain is on the mitochondrial matrix side. Residues 75 to 97 (FVWTVSPALLLIAIAFPSFKLLY) form a helical membrane-spanning segment. Topologically, residues 98-243 (LMDEVIDPSI…EKFLSWLDNQ (146 aa)) are mitochondrial intermembrane. Cu cation contacts are provided by His178, Cys213, Glu215, Cys217, His221, and Met224. Glu215 contacts Mg(2+).

The protein belongs to the cytochrome c oxidase subunit 2 family. As to quaternary structure, component of the cytochrome c oxidase (complex IV, CIV), a multisubunit enzyme composed of a catalytic core of 3 subunits and several supernumerary subunits. The complex exists as a monomer or a dimer and forms supercomplexes (SCs) in the inner mitochondrial membrane with ubiquinol-cytochrome c oxidoreductase (cytochrome b-c1 complex, complex III, CIII). Cu cation serves as cofactor.

It is found in the mitochondrion inner membrane. It carries out the reaction 4 Fe(II)-[cytochrome c] + O2 + 8 H(+)(in) = 4 Fe(III)-[cytochrome c] + 2 H2O + 4 H(+)(out). In terms of biological role, component of the cytochrome c oxidase, the last enzyme in the mitochondrial electron transport chain which drives oxidative phosphorylation. The respiratory chain contains 3 multisubunit complexes succinate dehydrogenase (complex II, CII), ubiquinol-cytochrome c oxidoreductase (cytochrome b-c1 complex, complex III, CIII) and cytochrome c oxidase (complex IV, CIV), that cooperate to transfer electrons derived from NADH and succinate to molecular oxygen, creating an electrochemical gradient over the inner membrane that drives transmembrane transport and the ATP synthase. Cytochrome c oxidase is the component of the respiratory chain that catalyzes the reduction of oxygen to water. Electrons originating from reduced cytochrome c in the intermembrane space (IMS) are transferred via the dinuclear copper A center (CU(A)) of subunit 2 and heme A of subunit 1 to the active site in subunit 1, a binuclear center (BNC) formed by heme A3 and copper B (CU(B)). The BNC reduces molecular oxygen to 2 water molecules using 4 electrons from cytochrome c in the IMS and 4 protons from the mitochondrial matrix. This is Cytochrome c oxidase subunit 2 from Pneumocystis carinii.